Consider the following 343-residue polypeptide: Phospholipid phosphatase-related protein type 2 (343 aa).

3 consecutive transmembrane segments (helical) span residues Phe12–Leu32, Ala72–Ala92, and Phe129–Val149. Asn165 carries an N-linked (GlcNAc...) asparagine glycan. Transmembrane regions (helical) follow at residues Ala210–Val230, Ser239–Tyr259, and Val266–His286. The interval Arg291–Thr343 is disordered. Residues Ser299 and Ser312 each carry the phosphoserine modification. Over residues Gly322–Arg335 the composition is skewed to basic residues.

Belongs to the PA-phosphatase related phosphoesterase family.

The protein localises to the membrane. The sequence is that of Phospholipid phosphatase-related protein type 2 from Mus musculus (Mouse).